The following is a 611-amino-acid chain: Nuclear cap-binding protein subunit 3 (611 aa).

The segment at Met1–Gly44 is disordered. The segment covering Glu20–Ala31 has biased composition (acidic residues). The RNA recognition motif (RRM) domain stretch occupies residues Glu108 to Gly169. A WLDD motif; essential for 7-methylguanosine-containing mRNA cap binding motif is present at residues Trp137–Asp140. Disordered regions lie at residues Asn159 to Leu230, Glu338 to Val360, Arg373 to Tyr393, Lys423 to Leu568, and Arg583 to Ser611. The span at Lys168–Ser179 shows a compositional bias: basic and acidic residues. 2 stretches are compositionally biased toward acidic residues: residues Asp196–Glu218 and Glu339–Asp358. A compositionally biased stretch (polar residues) spans Lys423–Lys439. Residues Ser446–Gln463 show a composition bias toward basic and acidic residues. A compositionally biased stretch (low complexity) spans Ser464–Lys475. Composition is skewed to basic and acidic residues over residues Ser501 to Ser511 and Pro544 to Lys556. Low complexity predominate over residues Glu602 to Ser611.

The protein belongs to the NCBP3 family. Component of an alternative cap-binding complex (CBC) composed of NCBP1/CBP80 and NCBP3.

Its subcellular location is the nucleus. The protein localises to the cytoplasm. Functionally, associates with NCBP1/CBP80 to form an alternative cap-binding complex (CBC) which plays a key role in mRNA export. NCBP3 serves as adapter protein linking the capped RNAs (m7GpppG-capped RNA) to NCBP1/CBP80. Unlike the conventional CBC with NCBP2 which binds both small nuclear RNA (snRNA) and messenger (mRNA) and is involved in their export from the nucleus, the alternative CBC with NCBP3 does not bind snRNA and associates only with mRNA thereby playing a role in only mRNA export. The polypeptide is Nuclear cap-binding protein subunit 3 (Xenopus tropicalis (Western clawed frog)).